Here is a 431-residue protein sequence, read N- to C-terminus: Histidinol dehydrogenase (431 aa).

Residues tyrosine 124, glutamine 187, and asparagine 210 each coordinate NAD(+). 3 residues coordinate substrate: serine 236, glutamine 258, and histidine 261. Residues glutamine 258 and histidine 261 each contribute to the Zn(2+) site. Residues glutamate 325 and histidine 326 each act as proton acceptor in the active site. Substrate-binding residues include histidine 326, aspartate 359, glutamate 413, and histidine 418. Aspartate 359 provides a ligand contact to Zn(2+). Histidine 418 lines the Zn(2+) pocket.

It belongs to the histidinol dehydrogenase family. It depends on Zn(2+) as a cofactor.

It catalyses the reaction L-histidinol + 2 NAD(+) + H2O = L-histidine + 2 NADH + 3 H(+). Its pathway is amino-acid biosynthesis; L-histidine biosynthesis; L-histidine from 5-phospho-alpha-D-ribose 1-diphosphate: step 9/9. Catalyzes the sequential NAD-dependent oxidations of L-histidinol to L-histidinaldehyde and then to L-histidine. This Legionella pneumophila (strain Lens) protein is Histidinol dehydrogenase.